The following is a 405-amino-acid chain: Cystathionine gamma-lyase (405 aa).

Substrate-binding residues include Arg62, Tyr114, and Arg119. An N6-(pyridoxal phosphate)lysine modification is found at Lys212. Glu339 is a substrate binding site.

Belongs to the trans-sulfuration enzymes family. As to quaternary structure, homotetramer. Interacts with CALM in a calcium-dependent manner. The cofactor is pyridoxal 5'-phosphate.

The protein resides in the cytoplasm. It carries out the reaction L,L-cystathionine + H2O = 2-oxobutanoate + L-cysteine + NH4(+). The enzyme catalyses L-cysteine + H2O = hydrogen sulfide + pyruvate + NH4(+) + H(+). It catalyses the reaction L-homocysteine + H2O = 2-oxobutanoate + hydrogen sulfide + NH4(+) + H(+). The catalysed reaction is L-homoserine = 2-oxobutanoate + NH4(+). It carries out the reaction L-selenocystathionine + H2O = L-selenocysteine + 2-oxobutanoate + NH4(+). Its pathway is amino-acid biosynthesis; L-cysteine biosynthesis; L-cysteine from L-homocysteine and L-serine: step 2/2. Its function is as follows. Catalyzes the last step in the trans-sulfuration pathway from L-methionine to L-cysteine in a pyridoxal-5'-phosphate (PLP)-dependent manner, which consists on cleaving the L,L-cystathionine molecule into L-cysteine, ammonia and 2-oxobutanoate. Part of the L-cysteine derived from the trans-sulfuration pathway is utilized for biosynthesis of the ubiquitous antioxidant glutathione. Besides its role in the conversion of L-cystathionine into L-cysteine, it utilizes L-cysteine and L-homocysteine as substrates (at much lower rates than L,L-cystathionine) to produce hydrogen sulfide (H2S). In vitro, it converts two L-cysteine molecules into lanthionine and H2S, and two L-homocysteine molecules to homolanthionine and H2S, which can be particularly relevant under conditions of severe hyperhomocysteinemia. Lanthionine and homolanthionine are structural homologs of L,L-cystathionine that differ by the absence or presence of an extra methylene group, respectively. Acts as a cysteine-protein sulfhydrase by mediating sulfhydration of target proteins: sulfhydration consists of converting -SH groups into -SSH on specific cysteine residues of target proteins such as GAPDH, PTPN1 and NF-kappa-B subunit RELA, thereby regulating their function. By generating the gasotransmitter H2S, it participates in a number of physiological processes such as vasodilation, bone protection, and inflammation. Plays an essential role in myogenesis by contributing to the biogenesis of H2S in skeletal muscle tissue. Can also accept homoserine as substrate. Catalyzes the elimination of selenocystathionine (which can be derived from the diet) to yield selenocysteine, ammonia and 2-oxobutanoate. This is Cystathionine gamma-lyase (CTH) from Macaca fascicularis (Crab-eating macaque).